The sequence spans 768 residues: Probable beta-glucosidase M (768 aa).

The first 19 residues, 1 to 19, serve as a signal peptide directing secretion; the sequence is MHAIAGLTGLLAGVSLSYA. 3 N-linked (GlcNAc...) asparagine glycosylation sites follow: N25, N72, and N259. The active site involves D287. 7 N-linked (GlcNAc...) asparagine glycosylation sites follow: N315, N322, N394, N434, N472, N543, and N651.

Belongs to the glycosyl hydrolase 3 family.

Its subcellular location is the secreted. The catalysed reaction is Hydrolysis of terminal, non-reducing beta-D-glucosyl residues with release of beta-D-glucose.. It functions in the pathway glycan metabolism; cellulose degradation. Its function is as follows. Beta-glucosidases are one of a number of cellulolytic enzymes involved in the degradation of cellulosic biomass. Catalyzes the last step releasing glucose from the inhibitory cellobiose. The chain is Probable beta-glucosidase M (bglM) from Aspergillus oryzae (strain ATCC 42149 / RIB 40) (Yellow koji mold).